The sequence spans 374 residues: tRNA 2-selenouridine synthase (374 aa).

Residues 12-136 form the Rhodanese domain; sequence FLRDVPMLDT…MRGFLLQTID (125 aa). C95 functions as the S-selanylcysteine intermediate in the catalytic mechanism.

The protein belongs to the SelU family. As to quaternary structure, monomer.

The catalysed reaction is 5-methylaminomethyl-2-thiouridine(34) in tRNA + selenophosphate + (2E)-geranyl diphosphate + H2O + H(+) = 5-methylaminomethyl-2-selenouridine(34) in tRNA + (2E)-thiogeraniol + phosphate + diphosphate. The enzyme catalyses 5-methylaminomethyl-2-thiouridine(34) in tRNA + (2E)-geranyl diphosphate = 5-methylaminomethyl-S-(2E)-geranyl-thiouridine(34) in tRNA + diphosphate. It catalyses the reaction 5-methylaminomethyl-S-(2E)-geranyl-thiouridine(34) in tRNA + selenophosphate + H(+) = 5-methylaminomethyl-2-(Se-phospho)selenouridine(34) in tRNA + (2E)-thiogeraniol. It carries out the reaction 5-methylaminomethyl-2-(Se-phospho)selenouridine(34) in tRNA + H2O = 5-methylaminomethyl-2-selenouridine(34) in tRNA + phosphate. Its function is as follows. Involved in the post-transcriptional modification of the uridine at the wobble position (U34) of tRNA(Lys), tRNA(Glu) and tRNA(Gln). Catalyzes the conversion of 2-thiouridine (S2U-RNA) to 2-selenouridine (Se2U-RNA). Acts in a two-step process involving geranylation of 2-thiouridine (S2U) to S-geranyl-2-thiouridine (geS2U) and subsequent selenation of the latter derivative to 2-selenouridine (Se2U) in the tRNA chain. In Bordetella petrii (strain ATCC BAA-461 / DSM 12804 / CCUG 43448), this protein is tRNA 2-selenouridine synthase.